A 256-amino-acid chain; its full sequence is Thiazole synthase (256 aa).

The active-site Schiff-base intermediate with DXP is Lys-95. Residues Gly-156, 182–183 (AG), and 204–205 (NT) each bind 1-deoxy-D-xylulose 5-phosphate.

This sequence belongs to the ThiG family. In terms of assembly, homotetramer. Forms heterodimers with either ThiH or ThiS.

The protein localises to the cytoplasm. It carries out the reaction [ThiS sulfur-carrier protein]-C-terminal-Gly-aminoethanethioate + 2-iminoacetate + 1-deoxy-D-xylulose 5-phosphate = [ThiS sulfur-carrier protein]-C-terminal Gly-Gly + 2-[(2R,5Z)-2-carboxy-4-methylthiazol-5(2H)-ylidene]ethyl phosphate + 2 H2O + H(+). The protein operates within cofactor biosynthesis; thiamine diphosphate biosynthesis. In terms of biological role, catalyzes the rearrangement of 1-deoxy-D-xylulose 5-phosphate (DXP) to produce the thiazole phosphate moiety of thiamine. Sulfur is provided by the thiocarboxylate moiety of the carrier protein ThiS. In vitro, sulfur can be provided by H(2)S. In Escherichia coli O157:H7, this protein is Thiazole synthase.